We begin with the raw amino-acid sequence, 293 residues long: Cell wall protein PGA31 (293 aa).

The N-terminal stretch at 1–18 (MKFLTAASLLTLSSSALA) is a signal peptide. Residue Asn-131 is glycosylated (N-linked (GlcNAc...) asparagine). The interval 161–187 (ESASSSSSSAAPEPTASSSEAPKETPV) is disordered. The segment covering 163-180 (ASSSSSSAAPEPTASSSE) has biased composition (low complexity). A glycan (N-linked (GlcNAc...) asparagine) is linked at Asn-190. The disordered stretch occupies residues 233-262 (VPSKTASSEAAPPKTTVDSVSKPAPSGKKP). Residue Gly-271 is the site of GPI-anchor amidated glycine attachment. Residues 272 to 293 (AANALTGGSVAIAVAAAIGLVF) constitute a propeptide, removed in mature form.

It belongs to the SRP1/TIP1 family. In terms of processing, the GPI-anchor is attached to the protein in the endoplasmic reticulum and serves to target the protein to the cell surface. There, the glucosamine-inositol phospholipid moiety is cleaved off and the GPI-modified mannoprotein is covalently attached via its lipidless GPI glycan remnant to the 1,6-beta-glucan of the outer cell wall layer.

It is found in the secreted. The protein resides in the cell wall. Its subcellular location is the membrane. In terms of biological role, component of the cell wall involved in virulence which plays a role in the relationship between C.albicans and the host. Involved in the regulation or assembly of chitin within the cell wall. This Candida albicans (strain SC5314 / ATCC MYA-2876) (Yeast) protein is Cell wall protein PGA31 (PGA31).